The primary structure comprises 161 residues: ATP synthase subunit b 1 (161 aa).

The helical transmembrane segment at 6-26 (EFYVALGFVIFVAILLYYGVH) threads the bilayer.

This sequence belongs to the ATPase B chain family. In terms of assembly, F-type ATPases have 2 components, F(1) - the catalytic core - and F(0) - the membrane proton channel. F(1) has five subunits: alpha(3), beta(3), gamma(1), delta(1), epsilon(1). F(0) has three main subunits: a(1), b(2) and c(10-14). The alpha and beta chains form an alternating ring which encloses part of the gamma chain. F(1) is attached to F(0) by a central stalk formed by the gamma and epsilon chains, while a peripheral stalk is formed by the delta and b chains.

It is found in the cell inner membrane. In terms of biological role, f(1)F(0) ATP synthase produces ATP from ADP in the presence of a proton or sodium gradient. F-type ATPases consist of two structural domains, F(1) containing the extramembraneous catalytic core and F(0) containing the membrane proton channel, linked together by a central stalk and a peripheral stalk. During catalysis, ATP synthesis in the catalytic domain of F(1) is coupled via a rotary mechanism of the central stalk subunits to proton translocation. Its function is as follows. Component of the F(0) channel, it forms part of the peripheral stalk, linking F(1) to F(0). This chain is ATP synthase subunit b 1, found in Beijerinckia indica subsp. indica (strain ATCC 9039 / DSM 1715 / NCIMB 8712).